Here is a 722-residue protein sequence, read N- to C-terminus: Formin-like protein 16 (722 aa).

Disordered stretches follow at residues 1 to 56 (MSPV…PMFD), 564 to 606 (ATED…PSRP), 635 to 672 (VGSP…HLSH), and 690 to 722 (PLLV…LRYQ). Pro residues predominate over residues 22 to 55 (PLPPPPPPPMRRSAPSPPPMSGRVPPPPPPPPMF). The region spanning 182–571 (FRCPVTKRSS…KAATEDVFGG (390 aa)) is the FH2 domain. Composition is skewed to pro residues over residues 593 to 605 (IRPP…PPSR), 638 to 658 (PSPP…PPPM), and 709 to 722 (APPP…LRYQ).

The protein belongs to the formin-like family. Class-II subfamily.

This chain is Formin-like protein 16 (FH16), found in Arabidopsis thaliana (Mouse-ear cress).